Reading from the N-terminus, the 237-residue chain is Lectin ConGF (237 aa).

Mn(2+) is bound by residues Glu8 and Asp10. Asp10, Tyr12, Asn14, and Asp19 together coordinate Ca(2+). An a carbohydrate-binding site is contributed by Asn14. The Mn(2+) site is built by Asp19 and His24. A carbohydrate-binding residues include Leu99, Tyr100, Asp208, and Arg228.

The protein belongs to the leguminous lectin family. Homotetramer; dimer of dimers. In terms of processing, concanavalin A-like lectins of the Diocleinae subtribe undergo proteolytic processing referred to as circular permutation. The propeptide is split into an N-terminal and a C-terminal part, the gamma and beta chain, respectively. These are then religated in beta-gamma order to form the mature alpha chain. The beta and gamma chains can often be detected in cell extracts. Residues 1-118 of the mature chain, as displayed here, probably constitute the beta chain in the propeptide, residues 119-237 the gamma chain.

Functionally, lectin. Induces paw edema in mice. Has a weak vasorelaxant effect on rat aorta. Has anti-inflammatory and anti-nociceptive effects. This chain is Lectin ConGF, found in Canavalia grandiflora (Jackbean).